A 582-amino-acid polypeptide reads, in one-letter code: PTS system lactose-specific EIICB component (582 aa).

The 402-residue stretch at 8 to 409 folds into the PTS EIIC type-3 domain; the sequence is IEKGKPFFEK…VVDVIIYYPF (402 aa). A run of 9 helical transmembrane segments spans residues 30-50, 64-84, 103-123, 137-157, 176-196, 222-242, 283-303, 339-359, and 381-401; these read GFIA…ITYV, GILM…VAGT, INFI…AADP, KGLL…NFFV, VFKD…LDLL, GWIG…VGIH, FVAT…FMWL, VFFI…KFFV, and IVMG…LIVV. Residues 453 to 473 are disordered; the sequence is ASEADTDDTSSVDETTSTSST. Low complexity predominate over residues 464 to 473; the sequence is VDETTSTSST. The region spanning 479 to 582 is the PTS EIIB type-3 domain; the sequence is QTNVLVLCAG…LEFVKQQFNN (104 aa). The active-site Phosphocysteine intermediate; for EIIB activity is C486. C486 carries the post-translational modification Phosphocysteine; by EIIA.

It is found in the cell membrane. The catalysed reaction is lactose(out) + N(pros)-phospho-L-histidyl-[protein] = lactose 6-phosphate(in) + L-histidyl-[protein]. Functionally, the phosphoenolpyruvate-dependent sugar phosphotransferase system (sugar PTS), a major carbohydrate active transport system, catalyzes the phosphorylation of incoming sugar substrates concomitantly with their translocation across the cell membrane. The enzyme II LacEF PTS system is involved in lactose transport. This is PTS system lactose-specific EIICB component from Staphylococcus epidermidis (strain ATCC 35984 / DSM 28319 / BCRC 17069 / CCUG 31568 / BM 3577 / RP62A).